A 366-amino-acid chain; its full sequence is Isocitrate dehydrogenase [NAD] subunit alpha, mitochondrial (366 aa).

The transit peptide at Met-1–Phe-27 directs the protein to the mitochondrion. At Lys-77 the chain carries N6-succinyllysine. The residue at position 101 (Thr-101) is a Phosphothreonine. Residues Arg-115, Arg-125, and Arg-146 each coordinate substrate. Lys-223 is modified (N6-acetyllysine). Residues Asp-233, Asp-257, and Asp-261 each contribute to the Mg(2+) site. At Lys-343 the chain carries N6-acetyllysine; alternate. Lys-343 carries the N6-succinyllysine; alternate modification. Lys-350 carries the post-translational modification N6-succinyllysine.

It belongs to the isocitrate and isopropylmalate dehydrogenases family. In terms of assembly, heterooligomer of subunits alpha (IDH3A), beta (IDH3B), and gamma (IDH3G) in the apparent ratio of 2:1:1. The heterodimer containing one IDH3A and one IDH3B subunit and the heterodimer containing one IDH3A and one IDH3G subunit assemble into a heterotetramer (which contains two subunits of IDH3A, one of IDH3B and one of IDH3G) and further into the heterooctamer. It depends on Mg(2+) as a cofactor. Requires Mn(2+) as cofactor.

Its subcellular location is the mitochondrion. The enzyme catalyses D-threo-isocitrate + NAD(+) = 2-oxoglutarate + CO2 + NADH. Its activity is regulated as follows. The heterotetramer and the heterodimer composed of IDH3A and IDH3G subunits can be allosterically activated by citrate (CIT) or/and ADP, and the two activators can act independently or synergistically. The heterodimer composed of IDH3A and IDH3B subunits cannot be allosterically regulated and the allosteric regulation of the heterotetramer is through the IDH3G subunit and not the IDH3B subunit. The IDH3G subunit contains the allosteric site which consists of a CIT-binding site and an ADP-binding site, and the binding of CIT and ADP causes conformational changes at the allosteric site which are transmitted to the active site in the catalytic subunit (IDH3A) through a cascade of conformational changes at the heterodimer interface, leading to stabilization of the isocitrate-binding at the active site and thus activation of the enzyme. ATP can activate the heterotetramer and the heterodimer composed of IDH3A and IDH3G subunits at low concentrations but inhibits their activities at high concentrations, whereas ATP exhibits only inhibitory effect on the heterodimer composed of IDH3A and IDH3B subunits. Its function is as follows. Catalytic subunit of the enzyme which catalyzes the decarboxylation of isocitrate (ICT) into alpha-ketoglutarate. The heterodimer composed of the alpha (IDH3A) and beta (IDH3B) subunits and the heterodimer composed of the alpha (IDH3A) and gamma (IDH3G) subunits, have considerable basal activity but the full activity of the heterotetramer (containing two subunits of IDH3A, one of IDH3B and one of IDH3G) requires the assembly and cooperative function of both heterodimers. This is Isocitrate dehydrogenase [NAD] subunit alpha, mitochondrial from Pongo abelii (Sumatran orangutan).